A 441-amino-acid polypeptide reads, in one-letter code: Diuretic hormone receptor (441 aa).

Residues Asn99, Asn107, and Asn112 are each glycosylated (N-linked (GlcNAc...) asparagine). Residues 135-158 (FVFFVGFCLSLVAIAVAIWIFLYF) traverse the membrane as a helical segment. The Cytoplasmic portion of the chain corresponds to 159-166 (KDLRCLRN). Residues 167–187 (TIHTNLMATYICNDATWIISA) form a helical membrane-spanning segment. At 188–194 (VVQEYVE) the chain is on the extracellular side. Residues 195–224 (NGGLCSVLAVLMHYFYLTNFFWMFVEGLYL) traverse the membrane as a helical segment. Residues 225–238 (FLLVVATFTGEKVK) are Cytoplasmic-facing. Residues 239–260 (LQIYIIIGWGIPGVIVVTWAII) traverse the membrane as a helical segment. Topologically, residues 261-291 (KHLGKTAPDNAGESHPMVLLIKHCPWMAEDY) are extracellular. A helical transmembrane segment spans residues 292–315 (FDWIHQAPVITVLAVNLVFLFSIM). Topologically, residues 316–338 (WVLITKLQSANTAETQQYRKATK) are cytoplasmic. A helical membrane pass occupies residues 339–357 (ALLVLFPLLGITYILMMQG). Residues 358-371 (PMDGVAGHVFRNAQ) lie on the Extracellular side of the membrane. The chain crosses the membrane as a helical span at residues 372–391 (ALLLSLQGFTVALFYCFLNT). Over 392 to 441 (EVQNTLRHRMSRWRETRTVGGGRRYTLSGHSKDWSPRSRTESIRCLQHRS) the chain is Cytoplasmic.

Belongs to the G-protein coupled receptor 2 family. Expressed in Malpighian tubules.

It localises to the cell membrane. Receptor for the insect diurectic hormone. The activity of this receptor is mediated by G proteins which activate adenylyl cyclase. This chain is Diuretic hormone receptor, found in Acheta domesticus (House cricket).